A 436-amino-acid chain; its full sequence is O-phosphoseryl-tRNA(Sec) selenium transferase (436 aa).

The tetramerization stretch occupies residues 1–44 (MLDFNIEGLIPKNMEKRGELVLNEYLKEIEDVFNHRKIPENGID). Arg72 contributes to the pyridoxal 5'-phosphate binding site. Residues 93–103 (GRSGNLVDPQP) form a phosphate loop (P-loop) region. Substrate-binding residues include Arg94, Ser95, and Gln102. An N6-(pyridoxal phosphate)lysine modification is found at Lys278. Residue Arg307 coordinates substrate.

The protein belongs to the SepSecS family. In terms of assembly, homotetramer. Pyridoxal 5'-phosphate serves as cofactor.

The enzyme catalyses O-phospho-L-seryl-tRNA(Sec) + selenophosphate + H2O = L-selenocysteinyl-tRNA(Sec) + 2 phosphate. It participates in aminoacyl-tRNA biosynthesis; selenocysteinyl-tRNA(Sec) biosynthesis; selenocysteinyl-tRNA(Sec) from L-seryl-tRNA(Sec) (archaeal/eukaryal route): step 2/2. In terms of biological role, converts O-phosphoseryl-tRNA(Sec) to selenocysteinyl-tRNA(Sec) required for selenoprotein biosynthesis. The polypeptide is O-phosphoseryl-tRNA(Sec) selenium transferase (spcS) (Methanococcus maripaludis (strain DSM 14266 / JCM 13030 / NBRC 101832 / S2 / LL)).